Reading from the N-terminus, the 80-residue chain is Translational regulator CsrA (80 aa).

The protein belongs to the CsrA/RsmA family. As to quaternary structure, homodimer; the beta-strands of each monomer intercalate to form a hydrophobic core, while the alpha-helices form wings that extend away from the core.

The protein resides in the cytoplasm. Its function is as follows. A translational regulator that binds mRNA to regulate translation initiation and/or mRNA stability. Usually binds in the 5'-UTR at or near the Shine-Dalgarno sequence preventing ribosome-binding, thus repressing translation. Its main target seems to be the major flagellin gene, while its function is anatagonized by FliW. In Desulforamulus reducens (strain ATCC BAA-1160 / DSM 100696 / MI-1) (Desulfotomaculum reducens), this protein is Translational regulator CsrA.